Here is an 81-residue protein sequence, read N- to C-terminus: Elsinochrome C biosynthesis cluster protein SNOG_08613 (81 aa).

Its function is as follows. Part of the gene cluster that mediates the biosynthesis of elsinochrome C, a perelyenequinone phytotoxin structurally similar to cercosporin. The first step of elsinochrome C biosynthesis is performed by the polyketide synthase elcA which catalyzes the formation of nor-toralactone. The starter unit acyltransferase (SAT) domain of elcA initiates polyketide extension by the selective utilization of acetyl-CoA, which is elongated to the heptaketide in the beta-ketoacyl synthase (KS) domain by successive condensations with six malonyl units introduced by the malonyl acyltransferase (MAT) domain. The product template (PT) domain catalyzes C4-C9 and C2-C11 aldol cyclizations and dehydrations to a trihydroxynaphthalene, which is thought to be delivered to the thioesterase (TE) domain for product release. The bifunctional enzyme elcB then methylates nor-toralactone to toralactone before conducting an unusual oxidative aromatic ring opening. The next step in perylenequinone biosynthesis is an O-methylation at the nascent OH-6 of the elcB product performed by the O-methyltransferase elcD. The oxidative coupling of the two monomeric naphthol units in perylenequinone biosynthesis is catalyzed by the FAD-dependent monooxygenase elcE and the multicopper oxidase elcG. ElcG might catalyze the first intermolecular coupling in a regio- and stereo-selective manner via a phenol radical coupling mechanism and the elcE could forge the second C-C bond intramolecularly via a hydride transfer mechanism. The fasciclin domain-containing protein elcF might also play a role duting this step. The last piece of the puzzle in the biosynthesis of elsinochrome C is the additional annulation by enolate coupling to afford the dihydrobenzo(ghi)perylenequinone system, catalyzed by the FAD-dependent monooxygenase elcH. The polypeptide is Elsinochrome C biosynthesis cluster protein SNOG_08613 (Phaeosphaeria nodorum (strain SN15 / ATCC MYA-4574 / FGSC 10173) (Glume blotch fungus)).